A 71-amino-acid polypeptide reads, in one-letter code: MKKTFYHYMMKHRAPLVKNEISDLAEAIYDDLSFPKQSEDYHEISSYLECSGLIESMSIFDKAWDLYLQER.

It belongs to the UPF0346 family.

The chain is UPF0346 protein Bcer98_1690 from Bacillus cytotoxicus (strain DSM 22905 / CIP 110041 / 391-98 / NVH 391-98).